Consider the following 1873-residue polypeptide: Ankyrin repeat domain-containing protein 31 (1873 aa).

Disordered regions lie at residues 1–27 and 361–380; these read MEEG…SDLE and EPLS…DQET. The segment covering 361–379 has biased composition (polar residues); that stretch reads EPLSNKRNSNSVTNSSDQE. ANK repeat units lie at residues 488–517, 521–550, and 554–583; these read FGEN…NVNQ, AGWT…DVNI, and YQIT…DPLF. Residues 707–740 are disordered; it reads TGLRKGNLHNVKDPNTNVPKGIGRRKTQHKRTQV. Basic residues predominate over residues 728-737; sequence IGRRKTQHKR. ANK repeat units follow at residues 1154-1183, 1187-1216, and 1220-1249; these read RGES…DVNL, AGWT…KVNC, and DGIL…NPNQ. Disordered stretches follow at residues 1242–1263, 1449–1482, 1512–1549, and 1606–1634; these read QNGA…EADD, RSEI…SGSM, FSGN…PSQP, and CDQD…ASES. Over residues 1250–1263 the composition is skewed to basic and acidic residues; that stretch reads KDQKQKSALDEADD. Polar residues-rich tracts occupy residues 1460-1482 and 1515-1525; these read ELTS…SGSM and NDMNSKQNGSD. Residues 1535–1544 show a composition bias toward basic and acidic residues; the sequence is RHSDGTEKNK. The span at 1621-1632 shows a compositional bias: polar residues; the sequence is KTSSQQSPTGAS. The RAMA domain maps to 1683–1778; it reads KKALNYSTAP…TYLGKELLRY (96 aa).

As to quaternary structure, interacts with REC114; the interaction is direct. Interacts with IHO1.

The protein resides in the nucleus. The protein localises to the chromosome. Its function is as follows. Required for DNA double-strand breaks (DSBs) formation during meiotic recombination. Regulates the spatial and temporal patterns of pre-DSB recombinosome assembly and recombination activity by acting as a scaffold that anchors REC114 and other factors to specific genomic locations, thereby regulating DSB formation. Plays a key role in recombination in the pseudoautosomal regions of sex chromosomes. The chain is Ankyrin repeat domain-containing protein 31 from Homo sapiens (Human).